Here is a 567-residue protein sequence, read N- to C-terminus: tRNA(His) guanylyltransferase 1 (567 aa).

3 residues coordinate Mg(2+): aspartate 342, glycine 343, and aspartate 389. GTP is bound by residues 342-347 and 388-389; these read DGCHFH and SD. Residues lysine 397 and lysine 403 each participate in a glycyl lysine isopeptide (Lys-Gly) (interchain with G-Cter in ubiquitin) cross-link.

This sequence belongs to the tRNA(His) guanylyltransferase family. Requires Mg(2+) as cofactor.

It is found in the nucleus. It localises to the nucleoplasm. The catalysed reaction is a 5'-end ribonucleotide-tRNA(His) + GTP + ATP + H2O = a 5'-end phospho-guanosine-ribonucleotide-tRNA(His) + AMP + 2 diphosphate + H(+). In terms of biological role, adds a GMP to the 5'-end of tRNA(His) after transcription and RNase P cleavage. The protein is tRNA(His) guanylyltransferase 1 (THG1) of Arabidopsis thaliana (Mouse-ear cress).